Here is a 165-residue protein sequence, read N- to C-terminus: Chorismate pyruvate-lyase (165 aa).

Residues Met35, Arg77, Leu115, and Glu156 each contribute to the substrate site.

Belongs to the UbiC family. In terms of assembly, monomer.

Its subcellular location is the cytoplasm. It carries out the reaction chorismate = 4-hydroxybenzoate + pyruvate. Its pathway is cofactor biosynthesis; ubiquinone biosynthesis. Its function is as follows. Removes the pyruvyl group from chorismate, with concomitant aromatization of the ring, to provide 4-hydroxybenzoate (4HB) for the ubiquinone pathway. This chain is Chorismate pyruvate-lyase, found in Salmonella schwarzengrund (strain CVM19633).